The chain runs to 270 residues: Oxidoreductase claK (270 aa).

This sequence belongs to the avfA family.

It participates in pigment biosynthesis. Oxidoreductase; part of the gene cluster that mediates the biosynthesis of the bianthraquinone cladofulvin, a conidial pigment not required for virulence but that plays a role in fitness and resistance to environmental stresses including UV light and low-temperature stress. The pathway begins with the synthesis of atrochrysone thioester by the polyketide synthase (PKS) claG. The atrochrysone carboxyl ACP thioesterase claF then breaks the thioester bond and releases the atrochrysone carboxylic acid from claG. This compound is decarboxylated by claH to yield emodin, which is further converted to chrysophanol hydroquinone by the reductase claC and the dehydratase claB. The cytochrome monooxygenase P450 claM then catalyzes the dimerization of nataloe-emodin to cladofulvin. The sequence is that of Oxidoreductase claK from Passalora fulva (Tomato leaf mold).